Here is a 621-residue protein sequence, read N- to C-terminus: Phosphoenolpyruvate carboxykinase [GTP] (621 aa).

Substrate-binding positions include Arg82 and 220–222; that span reads YGG. The Mn(2+) site is built by Lys229 and His249. Position 271 (Ser271) interacts with substrate. 272 to 277 serves as a coordination point for GTP; it reads QCGKTN. Residue Cys273 is part of the active site. Asp296 lines the Mn(2+) pocket. 386 to 388 lines the substrate pocket; sequence NSR. Residues Arg388, Arg419, and 514–517 each bind GTP; that span reads FGEN.

Belongs to the phosphoenolpyruvate carboxykinase [GTP] family. As to quaternary structure, monomer. It depends on Mn(2+) as a cofactor.

It localises to the cytoplasm. The catalysed reaction is oxaloacetate + GTP = phosphoenolpyruvate + GDP + CO2. It participates in carbohydrate biosynthesis; gluconeogenesis. In terms of biological role, catalyzes the conversion of oxaloacetate (OAA) to phosphoenolpyruvate (PEP), the rate-limiting step in the metabolic pathway that produces glucose from lactate and other precursors derived from the citric acid cycle. The protein is Phosphoenolpyruvate carboxykinase [GTP] of Corynebacterium kroppenstedtii (strain DSM 44385 / JCM 11950 / CIP 105744 / CCUG 35717).